Consider the following 802-residue polypeptide: Fibroblast growth factor receptor 3 (802 aa).

One can recognise an Ig-like C2-type 1 domain in the interval 27–115 (PDYLMVEQPP…ILRNFTIRVT (89 aa)). Cys52 and Cys98 are oxidised to a cystine. N-linked (GlcNAc...) asparagine glycans are attached at residues Asn74, Asn87, and Asn109. Residues 116 to 148 (DLPSSGDDEDDDDDDDDETEDREPPRWTQPERM) form a disordered region. The segment covering 121–136 (GDDEDDDDDDDDETED) has biased composition (acidic residues). Basic and acidic residues predominate over residues 137–148 (REPPRWTQPERM). Ig-like C2-type domains are found at residues 140–233 (PRWT…YQLD) and 242–342 (PILQ…FWLH). The cysteines at positions 165 and 217 are disulfide-linked. 5 N-linked (GlcNAc...) asparagine glycosylation sites follow: Asn214, Asn251, Asn283, Asn303, and Asn315. Cysteines 264 and 326 form a disulfide. A helical transmembrane segment spans residues 363–383 (ITVLIVVTSTIVFILLVIIVI). At 384-802 (THLMKVPSKK…HQQHNGAIPT (419 aa)) the chain is on the cytoplasmic side. The Protein kinase domain maps to 462 to 751 (LTLGKPLGEG…LTVTSTNEYL (290 aa)). Residues 468–476 (LGEGCFGQV) and Lys498 contribute to the ATP site. The active-site Proton acceptor is the Asp607. A phosphotyrosine; by autocatalysis mark is found at Tyr637, Tyr638, Tyr714, and Tyr750.

This sequence belongs to the protein kinase superfamily. Tyr protein kinase family. Fibroblast growth factor receptor subfamily. In terms of assembly, monomer. Homodimer after ligand binding. Autophosphorylated. Binding of FGF family members together with heparan sulfate proteoglycan or heparin promotes receptor dimerization and autophosphorylation on tyrosine residues. Autophosphorylation occurs in trans between the two FGFR molecules present in the dimer.

It is found in the cell membrane. It catalyses the reaction L-tyrosyl-[protein] + ATP = O-phospho-L-tyrosyl-[protein] + ADP + H(+). Present in an inactive conformation in the absence of bound ligand. Ligand binding leads to dimerization and activation by autophosphorylation on tyrosine residues. Functionally, tyrosine-protein kinase that acts as a cell-surface receptor for fibroblast growth factors and plays an essential role in the regulation of cell proliferation, differentiation and apoptosis. Plays an essential role in the regulation of chondrocyte differentiation, proliferation and apoptosis, and is required for normal skeleton development. Regulates both osteogenesis and postnatal bone mineralization by osteoblasts. Promotes apoptosis in chondrocytes, but can also promote cancer cell proliferation. Phosphorylates PLCG1, CBL and FRS2. Ligand binding leads to the activation of several signaling cascades. Activation of PLCG1 leads to the production of the cellular signaling molecules diacylglycerol and inositol 1,4,5-trisphosphate. Phosphorylation of FRS2 triggers recruitment of GRB2, GAB1, PIK3R1 and SOS1, and mediates activation of RAS, MAPK1/ERK2, MAPK3/ERK1 and the MAP kinase signaling pathway, as well as of the AKT1 signaling pathway. The sequence is that of Fibroblast growth factor receptor 3 (fgfr3) from Xenopus laevis (African clawed frog).